A 427-amino-acid chain; its full sequence is UDP-N-acetyl-D-mannosamine dehydrogenase (427 aa).

Tyr20, Ile21, Asp40, Arg45, Thr92, and Thr130 together coordinate NAD(+). Positions 157, 158, 209, 213, 216, 247, 249, and 260 each coordinate UDP-N-acetyl-alpha-D-mannosaminouronate. Lys209 functions as the Proton donor/acceptor in the catalytic mechanism. The active-site Nucleophile is Cys263. Tyr317 and Lys318 together coordinate UDP-N-acetyl-alpha-D-mannosaminouronate. Arg325 contributes to the NAD(+) binding site. Position 403 (Lys403) interacts with UDP-N-acetyl-alpha-D-mannosaminouronate.

The protein belongs to the UDP-glucose/GDP-mannose dehydrogenase family. Homotetramer; probably dimer of dimers.

The enzyme catalyses UDP-N-acetyl-alpha-D-mannosamine + 2 NAD(+) + H2O = UDP-N-acetyl-alpha-D-mannosaminouronate + 2 NADH + 3 H(+). In terms of biological role, catalyzes the four-electron oxidation of UDP-N-acetyl-D-mannosamine (UDP-ManNAc), reducing NAD(+) and releasing UDP-N-acetylmannosaminuronic acid (UDP-ManNAcA). The chain is UDP-N-acetyl-D-mannosamine dehydrogenase (wecC) from Methanocaldococcus jannaschii (strain ATCC 43067 / DSM 2661 / JAL-1 / JCM 10045 / NBRC 100440) (Methanococcus jannaschii).